A 32-amino-acid polypeptide reads, in one-letter code: DNA-binding protein HU (32 aa).

This sequence belongs to the bacterial histone-like protein family.

In terms of biological role, histone-like DNA-binding protein which is capable of wrapping DNA to stabilize it, and thus to prevent its denaturation under extreme environmental conditions. The chain is DNA-binding protein HU (hup) from Synechocystis sp. (strain PCC 6701).